We begin with the raw amino-acid sequence, 323 residues long: Viral cathepsin (323 aa).

A signal peptide spans 1–18 (MSKFLLYWFVYGVVCSAA). The propeptide at 19–112 (YDILKAPNYF…VVLDRPPGKG (94 aa)) is activation peptide. Intrachain disulfides connect Cys-133–Cys-174, Cys-167–Cys-207, and Cys-262–Cys-310. The active site involves Cys-136. The N-linked (GlcNAc...) asparagine; by host glycan is linked to Asn-158. Residues His-269 and Asn-289 contribute to the active site.

This sequence belongs to the peptidase C1 family. In terms of processing, synthesized as an inactive proenzyme and activated by proteolytic removal of the inhibitory propeptide.

It catalyses the reaction Endopeptidase of broad specificity, hydrolyzing substrates of both cathepsin L and cathepsin B.. In terms of biological role, cysteine protease that plays an essential role in host liquefaction to facilitate horizontal transmission of the virus. May participate in the degradation of foreign protein expressed by the baculovirus system. This chain is Viral cathepsin (VCATH), found in Lepidoptera (butterflies and moths).